A 318-amino-acid polypeptide reads, in one-letter code: MASPGCLLCVLGLLLCGAASLELSRPHGDTAKKPIIGILMQKCRNKVMKNYGRYYIAASYVKYLESAGARVVPVRLDLTEKDYEILFKSINGILFPGGSVDLRRSDYAKVAKIFYNLSIQSFDDGDYFPVWGTCLGFEELSLLISGECLLTATDTVDVAMPLNFTGGQLHSRMFQNFPTELLLSLAVEPLTANFHKWSLSVKNFTMNEKLKKFFNVLTTNTDGKIEFISTMEGYKYPVYGVQWHPEKAPYEWKNLDGISHAPNAVKTAFYLAEFFVNEARKNNHHFKSESEEEKALIYQFSPIYTGNISSFQQCYIFD.

Residues 1-24 form the signal peptide; that stretch reads MASPGCLLCVLGLLLCGAASLELS. Residues 25–318 enclose the Gamma-glutamyl hydrolase domain; the sequence is RPHGDTAKKP…SSFQQCYIFD (294 aa). N-linked (GlcNAc...) asparagine glycosylation occurs at asparagine 116. Cysteine 134 acts as the Nucleophile in catalysis. N-linked (GlcNAc...) asparagine glycosylation is found at asparagine 163 and asparagine 203. Catalysis depends on histidine 244, which acts as the Proton donor. An N-linked (GlcNAc...) asparagine; partial glycan is attached at asparagine 307.

Belongs to the peptidase C26 family. Homodimer.

The protein resides in the secreted. The protein localises to the extracellular space. Its subcellular location is the lysosome. It is found in the melanosome. The enzyme catalyses (6S)-5,6,7,8-tetrahydrofolyl-(gamma-L-Glu)(n) + (n-1) H2O = (6S)-5,6,7,8-tetrahydrofolate + (n-1) L-glutamate. Hydrolyzes the polyglutamate sidechains of pteroylpolyglutamates. Progressively removes gamma-glutamyl residues from pteroylpoly-gamma-glutamate to yield pteroyl-alpha-glutamate (folic acid) and free glutamate. May play an important role in the bioavailability of dietary pteroylpolyglutamates and in the metabolism of pteroylpolyglutamates and antifolates. In Homo sapiens (Human), this protein is Gamma-glutamyl hydrolase.